A 381-amino-acid polypeptide reads, in one-letter code: Dual-specificity RNA methyltransferase RlmN (381 aa).

Residue Glu95 is the Proton acceptor of the active site. A Radical SAM core domain is found at 101–339 (DGRRGTLCVS…MTTVRTTRGD (239 aa)). A disulfide bridge connects residues Cys108 and Cys345. The [4Fe-4S] cluster site is built by Cys115, Cys119, and Cys122. S-adenosyl-L-methionine contacts are provided by residues 169–170 (GE), Ser201, 223–225 (SLH), and Asn302. Catalysis depends on Cys345, which acts as the S-methylcysteine intermediate.

This sequence belongs to the radical SAM superfamily. RlmN family. [4Fe-4S] cluster serves as cofactor.

The protein localises to the cytoplasm. The catalysed reaction is adenosine(2503) in 23S rRNA + 2 reduced [2Fe-2S]-[ferredoxin] + 2 S-adenosyl-L-methionine = 2-methyladenosine(2503) in 23S rRNA + 5'-deoxyadenosine + L-methionine + 2 oxidized [2Fe-2S]-[ferredoxin] + S-adenosyl-L-homocysteine. It catalyses the reaction adenosine(37) in tRNA + 2 reduced [2Fe-2S]-[ferredoxin] + 2 S-adenosyl-L-methionine = 2-methyladenosine(37) in tRNA + 5'-deoxyadenosine + L-methionine + 2 oxidized [2Fe-2S]-[ferredoxin] + S-adenosyl-L-homocysteine. Its function is as follows. Specifically methylates position 2 of adenine 2503 in 23S rRNA and position 2 of adenine 37 in tRNAs. m2A2503 modification seems to play a crucial role in the proofreading step occurring at the peptidyl transferase center and thus would serve to optimize ribosomal fidelity. This chain is Dual-specificity RNA methyltransferase RlmN, found in Alcanivorax borkumensis (strain ATCC 700651 / DSM 11573 / NCIMB 13689 / SK2).